The primary structure comprises 274 residues: Diaminopimelate epimerase (274 aa).

Positions 11, 44, and 64 each coordinate substrate. Cys-73 acts as the Proton donor in catalysis. Substrate-binding positions include 74-75 (GN), Asn-157, Asn-190, and 208-209 (ER). The active-site Proton acceptor is Cys-217. Residue 218–219 (GS) participates in substrate binding.

The protein belongs to the diaminopimelate epimerase family. Homodimer.

The protein localises to the cytoplasm. It catalyses the reaction (2S,6S)-2,6-diaminopimelate = meso-2,6-diaminopimelate. It participates in amino-acid biosynthesis; L-lysine biosynthesis via DAP pathway; DL-2,6-diaminopimelate from LL-2,6-diaminopimelate: step 1/1. Catalyzes the stereoinversion of LL-2,6-diaminopimelate (L,L-DAP) to meso-diaminopimelate (meso-DAP), a precursor of L-lysine and an essential component of the bacterial peptidoglycan. The sequence is that of Diaminopimelate epimerase from Pectobacterium atrosepticum (strain SCRI 1043 / ATCC BAA-672) (Erwinia carotovora subsp. atroseptica).